A 433-amino-acid polypeptide reads, in one-letter code: Pyrimidine-nucleoside phosphorylase (433 aa).

81–83 (KHS) is a phosphate binding site. Residues G88 and T90 each coordinate K(+). Residues T92, 108 to 110 (KMS), and T120 each bind phosphate. 2 residues coordinate substrate: R168 and K187. K(+)-binding residues include L243, A246, and E255.

This sequence belongs to the thymidine/pyrimidine-nucleoside phosphorylase family. In terms of assembly, homodimer. It depends on K(+) as a cofactor.

The catalysed reaction is uridine + phosphate = alpha-D-ribose 1-phosphate + uracil. It carries out the reaction thymidine + phosphate = 2-deoxy-alpha-D-ribose 1-phosphate + thymine. The enzyme catalyses 2'-deoxyuridine + phosphate = 2-deoxy-alpha-D-ribose 1-phosphate + uracil. Functionally, catalyzes phosphorolysis of the pyrimidine nucleosides uridine, thymidine and 2'-deoxyuridine with the formation of the corresponding pyrimidine base and ribose-1-phosphate. The polypeptide is Pyrimidine-nucleoside phosphorylase (pdp) (Staphylococcus epidermidis (strain ATCC 12228 / FDA PCI 1200)).